The chain runs to 154 residues: Ribonuclease 8 (154 aa).

Residues 1-27 (MAPARAGCCPLLLLLLGLWVAQIPVSA) form the signal peptide. Residue H42 is the Proton acceptor of the active site. Cystine bridges form between C64–C118 and C89–C96. Substrate contacts are provided by residues 65-69 (KDLNT) and K90. H149 (proton donor) is an active-site residue.

The protein belongs to the pancreatic ribonuclease family.

Its subcellular location is the secreted. Functionally, has a low ribonuclease activity. The protein is Ribonuclease 8 (RNASE8) of Chlorocebus aethiops (Green monkey).